Here is a 489-residue protein sequence, read N- to C-terminus: 6-phosphogluconate dehydrogenase, decarboxylating 1 (489 aa).

NADP(+)-binding positions include 9 to 14 (GLAVMG) and 32 to 34 (NRT). S50 bears the Phosphoserine mark. Residues 74 to 76 (VKA) and N102 contribute to the NADP(+) site. Residues N102 and 128 to 130 (SGG) each bind substrate. K182 functions as the Proton acceptor in the catalytic mechanism. A substrate-binding site is contributed by 185-186 (HN). The active-site Proton donor is E189. 5 residues coordinate substrate: Y190, K259, R286, R446, and H452.

This sequence belongs to the 6-phosphogluconate dehydrogenase family. In terms of assembly, homodimer.

The protein localises to the cytoplasm. It carries out the reaction 6-phospho-D-gluconate + NADP(+) = D-ribulose 5-phosphate + CO2 + NADPH. The protein operates within carbohydrate degradation; pentose phosphate pathway; D-ribulose 5-phosphate from D-glucose 6-phosphate (oxidative stage): step 3/3. Functionally, catalyzes the oxidative decarboxylation of 6-phosphogluconate to ribulose 5-phosphate and CO(2), with concomitant reduction of NADP to NADPH. The polypeptide is 6-phosphogluconate dehydrogenase, decarboxylating 1 (GND1) (Saccharomyces cerevisiae (strain ATCC 204508 / S288c) (Baker's yeast)).